We begin with the raw amino-acid sequence, 265 residues long: Hydroxyethylthiazole kinase (265 aa).

Met50 serves as a coordination point for substrate. ATP-binding residues include Arg125 and Thr171. Gly198 lines the substrate pocket.

Belongs to the Thz kinase family. The cofactor is Mg(2+).

It catalyses the reaction 5-(2-hydroxyethyl)-4-methylthiazole + ATP = 4-methyl-5-(2-phosphooxyethyl)-thiazole + ADP + H(+). Its pathway is cofactor biosynthesis; thiamine diphosphate biosynthesis; 4-methyl-5-(2-phosphoethyl)-thiazole from 5-(2-hydroxyethyl)-4-methylthiazole: step 1/1. Its function is as follows. Catalyzes the phosphorylation of the hydroxyl group of 4-methyl-5-beta-hydroxyethylthiazole (THZ). The chain is Hydroxyethylthiazole kinase from Salmonella typhimurium (strain LT2 / SGSC1412 / ATCC 700720).